A 226-amino-acid polypeptide reads, in one-letter code: Phosphoheptose isomerase (226 aa).

An SIS domain is found at 50–212 (IAGVFETGGK…ERMMGYGTEC (163 aa)). 65–67 (NGG) provides a ligand contact to substrate. Zn(2+) is bound by residues His74 and Glu78. Substrate-binding positions include Glu78, 109–110 (ND), 135–137 (STS), Ser140, and Gln188. Zn(2+)-binding residues include Gln188 and His196.

It belongs to the SIS family. GmhA subfamily. Zn(2+) serves as cofactor.

It localises to the cytoplasm. It catalyses the reaction 2 D-sedoheptulose 7-phosphate = D-glycero-alpha-D-manno-heptose 7-phosphate + D-glycero-beta-D-manno-heptose 7-phosphate. Its pathway is carbohydrate biosynthesis; D-glycero-D-manno-heptose 7-phosphate biosynthesis; D-glycero-alpha-D-manno-heptose 7-phosphate and D-glycero-beta-D-manno-heptose 7-phosphate from sedoheptulose 7-phosphate: step 1/1. Catalyzes the isomerization of sedoheptulose 7-phosphate in D-glycero-D-manno-heptose 7-phosphate. The polypeptide is Phosphoheptose isomerase (Chlorobium phaeobacteroides (strain DSM 266 / SMG 266 / 2430)).